Consider the following 70-residue polypeptide: Protein tam14 (70 aa).

Residues 1–19 (MPTVQTPSQRRANTQFQKN) are compositionally biased toward polar residues. Residues 1 to 20 (MPTVQTPSQRRANTQFQKNI) form a disordered region. The helical transmembrane segment at 45 to 65 (IAMFFILLMSGGIILGILRFL) threads the bilayer.

This sequence belongs to the RAMP4 family.

The protein resides in the membrane. It localises to the endoplasmic reticulum membrane. Its function is as follows. Interacts with target proteins during their translocation into the lumen of the endoplasmic reticulum. Protects unfolded target proteins against degradation during ER stress. May facilitate glycosylation of target proteins after termination of ER stress. The polypeptide is Protein tam14 (tam14) (Schizosaccharomyces pombe (strain 972 / ATCC 24843) (Fission yeast)).